Here is a 238-residue protein sequence, read N- to C-terminus: Probable transcriptional regulatory protein HH_1604 (238 aa).

Belongs to the TACO1 family.

Its subcellular location is the cytoplasm. This chain is Probable transcriptional regulatory protein HH_1604, found in Helicobacter hepaticus (strain ATCC 51449 / 3B1).